Consider the following 306-residue polypeptide: Extensin (306 aa).

The N-terminal stretch at 1-32 (MGRIARGSKMSSLIVSLLVVLVSLNLASETTA) is a signal peptide. The segment at 33–306 (KYTYSSPPPP…YTSPPPPHHY (274 aa)) is disordered. 4 stretches are compositionally biased toward pro residues: residues 38 to 122 (SPPP…PKHS), 133 to 152 (SPPP…PKHS), 183 to 214 (SPPP…PKHS), and 225 to 290 (SPPP…SPPP).

Hydroxylated on proline residues in the S-P-P-P-P repeat. In terms of processing, O-glycosylated on hydroxyprolines.

The protein resides in the secreted. It localises to the primary cell wall. Functionally, structural component in primary cell wall. In Daucus carota (Wild carrot), this protein is Extensin.